The sequence spans 881 residues: Alanine--tRNA ligase (881 aa).

This sequence belongs to the class-II aminoacyl-tRNA synthetase family.

The protein localises to the cytoplasm. The catalysed reaction is tRNA(Ala) + L-alanine + ATP = L-alanyl-tRNA(Ala) + AMP + diphosphate. In terms of biological role, catalyzes the attachment of alanine to tRNA(Ala) in a two-step reaction: alanine is first activated by ATP to form Ala-AMP and then transferred to the acceptor end of tRNA(Ala). Also edits incorrectly charged Ser-tRNA(Ala) and Gly-tRNA(Ala) via its editing domain. This chain is Alanine--tRNA ligase (alaS), found in Lacticaseibacillus paracasei (strain ATCC 334 / BCRC 17002 / CCUG 31169 / CIP 107868 / KCTC 3260 / NRRL B-441) (Lactobacillus paracasei).